The sequence spans 261 residues: ATP synthase subunit a (261 aa).

Positions 1–14 are cleaved as a propeptide — removed in mature form; it reads MSTLSFNNISTEVL. Transmembrane regions (helical) follow at residues 38-58, 96-116, 126-146, 153-173, 191-211, 214-234, and 235-255; these read ITNI…INLL, IYFP…LIGM, HFVV…ILGF, FFSL…LVLI, ANIL…YNIM, GIIF…FSGL, and ELGI…GYIK.

The protein belongs to the ATPase A chain family. As to quaternary structure, F-type ATPases have 2 components, CF(1) - the catalytic core - and CF(0) - the membrane proton channel. CF(1) has five subunits: alpha(3), beta(3), gamma(1), delta(1), epsilon(1). CF(0) has three main subunits: a, b and c.

The protein resides in the mitochondrion inner membrane. Its function is as follows. Mitochondrial membrane ATP synthase (F(1)F(0) ATP synthase or Complex V) produces ATP from ADP in the presence of a proton gradient across the membrane which is generated by electron transport complexes of the respiratory chain. F-type ATPases consist of two structural domains, F(1) - containing the extramembraneous catalytic core and F(0) - containing the membrane proton channel, linked together by a central stalk and a peripheral stalk. During catalysis, ATP synthesis in the catalytic domain of F(1) is coupled via a rotary mechanism of the central stalk subunits to proton translocation. Key component of the proton channel; it may play a direct role in the translocation of protons across the membrane. The polypeptide is ATP synthase subunit a (atp-6) (Neurospora crassa (strain ATCC 24698 / 74-OR23-1A / CBS 708.71 / DSM 1257 / FGSC 987)).